The sequence spans 120 residues: MIF-like protein mif-2 (120 aa).

The protein belongs to the MIF family.

This Caenorhabditis elegans protein is MIF-like protein mif-2 (mif-2).